A 307-amino-acid chain; its full sequence is Dioxygenase swnH1 (307 aa).

The Fe cation site is built by histidine 149, aspartate 151, and histidine 227.

Belongs to the PhyH family. In terms of assembly, homodimer. Requires Fe cation as cofactor.

Its pathway is mycotoxin biosynthesis. Its function is as follows. Dioxygenase; part of the gene cluster that mediates the biosynthesis of swainsonine (SW), a cytotoxic fungal alkaloid and a potential cancer therapy drug. Swainsonine production occurs via a multibranched pathway and is dispensable for fungal colonization of plants and infection of insect hosts. The first step of swainsonine biosynthesis is the production of the precursor pipecolic acid (PA) via conversion of L-lysine (Lys) to 1-piperideine-6-carboxylate (P6C) by the aminotransferase swnA, the latter being further reduced to PA by the reductase swnR. The PKS-NRPS hybrid synthetase swnK uptakes and condensates PA and malonyl-CoA with and without skipping of the ketoreductase (KR) domain in order to produce 3 intermediates, 1-oxoindolizidine, (1S)-1-hydroxyindolizin, and (1R)-1-hydroxyindolizine; with the transisomer (1S)-1-hydroxyindolizin being predominant. The terminal thioester reductase (TE) domain of swnK is involved in reduction of the thioester bond to release the intermediate aldehydes. The oxidoreductase swnN could contribute to the reduction of 1-oxoindolizidine to (1S)-1-hydroxyindolizin and (1R)-1-hydroxyindolizine, contributing to the major route of SW production. The dioxygenase swnH2 would be responsible for the oxidization of (1R)-1-hydroxyindolizine into (1R,2S)-1,2-dihydroxyindolizine and of (1S)-1-hydroxyindolizin to yield both (1R,2S)-1,2-dihydroxyindolizine and (1S,2S)-1,2-dihydroxyindolizine. The dioxygenase swnH1 then performs the conversion of the 1,2-dihydroxyindolizine epimers to SW. This is Dioxygenase swnH1 from Arthroderma benhamiae (strain ATCC MYA-4681 / CBS 112371) (Trichophyton mentagrophytes).